We begin with the raw amino-acid sequence, 331 residues long: Ketol-acid reductoisomerase (NADP(+)) (331 aa).

The region spanning Ala3–Thr183 is the KARI N-terminal Rossmann domain. Residues Tyr26 to Gln29, Ser52, and Ser54 each bind NADP(+). Residue His109 is part of the active site. Gly135 contacts NADP(+). One can recognise a KARI C-terminal knotted domain in the interval Thr184 to Leu329. Mg(2+)-binding residues include Asp192, Glu196, Glu228, and Glu232. Ser253 serves as a coordination point for substrate.

It belongs to the ketol-acid reductoisomerase family. Mg(2+) is required as a cofactor.

It catalyses the reaction (2R)-2,3-dihydroxy-3-methylbutanoate + NADP(+) = (2S)-2-acetolactate + NADPH + H(+). The catalysed reaction is (2R,3R)-2,3-dihydroxy-3-methylpentanoate + NADP(+) = (S)-2-ethyl-2-hydroxy-3-oxobutanoate + NADPH + H(+). It participates in amino-acid biosynthesis; L-isoleucine biosynthesis; L-isoleucine from 2-oxobutanoate: step 2/4. The protein operates within amino-acid biosynthesis; L-valine biosynthesis; L-valine from pyruvate: step 2/4. Its function is as follows. Involved in the biosynthesis of branched-chain amino acids (BCAA). Catalyzes an alkyl-migration followed by a ketol-acid reduction of (S)-2-acetolactate (S2AL) to yield (R)-2,3-dihydroxy-isovalerate. In the isomerase reaction, S2AL is rearranged via a Mg-dependent methyl migration to produce 3-hydroxy-3-methyl-2-ketobutyrate (HMKB). In the reductase reaction, this 2-ketoacid undergoes a metal-dependent reduction by NADPH to yield (R)-2,3-dihydroxy-isovalerate. This chain is Ketol-acid reductoisomerase (NADP(+)), found in Thermobifida fusca (strain YX).